A 274-amino-acid polypeptide reads, in one-letter code: Large ribosomal subunit protein uL2 (274 aa).

The disordered stretch occupies residues 224–256 (VMNPVDHPHGGGEGKTGEGRHPVDPWGNLTKGY). The segment covering 229–246 (DHPHGGGEGKTGEGRHPV) has biased composition (basic and acidic residues).

It belongs to the universal ribosomal protein uL2 family. In terms of assembly, part of the 50S ribosomal subunit. Forms a bridge to the 30S subunit in the 70S ribosome.

Its function is as follows. One of the primary rRNA binding proteins. Required for association of the 30S and 50S subunits to form the 70S ribosome, for tRNA binding and peptide bond formation. It has been suggested to have peptidyltransferase activity; this is somewhat controversial. Makes several contacts with the 16S rRNA in the 70S ribosome. This Polaromonas sp. (strain JS666 / ATCC BAA-500) protein is Large ribosomal subunit protein uL2.